A 110-amino-acid polypeptide reads, in one-letter code: Flagellar hook-basal body complex protein FliE (110 aa).

Belongs to the FliE family.

The protein resides in the bacterial flagellum basal body. The chain is Flagellar hook-basal body complex protein FliE from Ralstonia nicotianae (strain ATCC BAA-1114 / GMI1000) (Ralstonia solanacearum).